The primary structure comprises 503 residues: Cytochrome P450 3A9 (503 aa).

Cys-442 is a heme binding site.

This sequence belongs to the cytochrome P450 family. Heme serves as cofactor. In terms of tissue distribution, mainly expressed in olfactory epithelium.

The protein localises to the endoplasmic reticulum membrane. Its subcellular location is the microsome membrane. It carries out the reaction an organic molecule + reduced [NADPH--hemoprotein reductase] + O2 = an alcohol + oxidized [NADPH--hemoprotein reductase] + H2O + H(+). This isozyme seems to be implicated in olfaction. Active in the demethylation of erythromycin as well as benzphetamine. In Rattus norvegicus (Rat), this protein is Cytochrome P450 3A9 (Cyp3a9).